The sequence spans 204 residues: Probable nicotinate-nucleotide adenylyltransferase (204 aa).

Belongs to the NadD family.

It carries out the reaction nicotinate beta-D-ribonucleotide + ATP + H(+) = deamido-NAD(+) + diphosphate. It participates in cofactor biosynthesis; NAD(+) biosynthesis; deamido-NAD(+) from nicotinate D-ribonucleotide: step 1/1. Functionally, catalyzes the reversible adenylation of nicotinate mononucleotide (NaMN) to nicotinic acid adenine dinucleotide (NaAD). The polypeptide is Probable nicotinate-nucleotide adenylyltransferase (Dehalococcoides mccartyi (strain CBDB1)).